The sequence spans 553 residues: Glycine betaine/proline/choline transporter VP1723 (553 aa).

12 helical membrane passes run 43–63, 85–105, 122–142, 191–211, 231–251, 278–298, 310–330, 362–382, 393–413, 443–463, 490–510, and 515–535; these read NRVF…TLTF, FFLA…VTPL, AGWL…FFGV, WALH…IFSF, VWGW…VFGL, TQVV…VAGL, MILA…MAIL, WTAF…MFIA, FIIC…TAFG, VMPF…VFFI, VFWC…GGLA, and MAVT…VSLI.

The protein belongs to the BCCT transporter (TC 2.A.15) family.

It localises to the cell inner membrane. Functionally, involved in the uptake of osmoprotectants. Can transport glycine betaine, proline and choline. The polypeptide is Glycine betaine/proline/choline transporter VP1723 (Vibrio parahaemolyticus serotype O3:K6 (strain RIMD 2210633)).